The sequence spans 242 residues: uncharacterized protein (242 aa).

A run of 3 helical transmembrane segments spans residues 75 to 95, 116 to 136, and 176 to 196; these read YAIF…HNFY, IVLI…FSLI, and IQGL…LEVI. Positions 204-242 are disordered; the sequence is DVEMSSMRGQAITTEPASDNTMAEGTDCNTSKDVESGSS. Over residues 210-232 the composition is skewed to polar residues; it reads MRGQAITTEPASDNTMAEGTDCN. Over residues 233–242 the composition is skewed to basic and acidic residues; the sequence is TSKDVESGSS.

The protein localises to the cytoplasm. The protein resides in the membrane. This is an uncharacterized protein from Schizosaccharomyces pombe (strain 972 / ATCC 24843) (Fission yeast).